We begin with the raw amino-acid sequence, 190 residues long: Cytoplasmic envelopment protein 3 (190 aa).

Gly2 carries N-myristoyl glycine; by host lipidation. The disordered stretch occupies residues 27–190 (RQVSLRSYDN…TKKPAASLPF (164 aa)). Polar residues predominate over residues 30–43 (SLRSYDNIPPTSSS). Positions 44–58 (DEGEDDDDGEDDDNE) are enriched in acidic residues. The segment covering 80–90 (SHREATHDGSK) has biased composition (basic and acidic residues). Residues 108–123 (KQSKKKKKPSKHHHHQ) are compositionally biased toward basic residues. Acidic residues predominate over residues 130-139 (ETDDLDEEDT).

It belongs to the herpesviridae cytoplasmic envelopment protein 3 family. In terms of assembly, interacts with cytoplasmic envelopment protein 2; this interaction is essential for the proper localization of each protein to the assembly complex and thus for the production of infectious virus. Post-translationally, myristoylation and palmitoylation (probably on one or more of the nearby cysteines at the N-terminus) enable membrane-binding and Golgi apparatus-specific targeting and are essential for efficient packaging. In terms of processing, phosphorylated. Phosphorylation does not seem to be required for recycling to the host Golgi apparatus. Packaging is selective for underphosphorylated forms.

The protein localises to the virion tegument. It localises to the virion membrane. The protein resides in the host cell membrane. Its subcellular location is the host Golgi apparatus membrane. In terms of biological role, plays an important role in the cytoplasmic envelopment of tegument proteins and capsids during the assembly and egress processes. Also participates in viral entry at the fusion step probably by regulating the core fusion machinery. The chain is Cytoplasmic envelopment protein 3 (UL99) from Human cytomegalovirus (strain AD169) (HHV-5).